A 202-amino-acid polypeptide reads, in one-letter code: Holliday junction branch migration complex subunit RuvA (202 aa).

The tract at residues 1 to 64 (MIGRLRGTLA…EDAQLLYGFA (64 aa)) is domain I. Residues 65–143 (SKRERDFFRE…AWEAVPSMFA (79 aa)) form a domain II region. Residues 144-154 (LVPNQPDAPAP) are flexible linker. Residues 154-202 (PVASAESDAVSALISLGYKPQEASKAVSAIKDKGLSSEDMIRRALKGMI) form a domain III region.

This sequence belongs to the RuvA family. In terms of assembly, homotetramer. Forms an RuvA(8)-RuvB(12)-Holliday junction (HJ) complex. HJ DNA is sandwiched between 2 RuvA tetramers; dsDNA enters through RuvA and exits via RuvB. An RuvB hexamer assembles on each DNA strand where it exits the tetramer. Each RuvB hexamer is contacted by two RuvA subunits (via domain III) on 2 adjacent RuvB subunits; this complex drives branch migration. In the full resolvosome a probable DNA-RuvA(4)-RuvB(12)-RuvC(2) complex forms which resolves the HJ.

Its subcellular location is the cytoplasm. Functionally, the RuvA-RuvB-RuvC complex processes Holliday junction (HJ) DNA during genetic recombination and DNA repair, while the RuvA-RuvB complex plays an important role in the rescue of blocked DNA replication forks via replication fork reversal (RFR). RuvA specifically binds to HJ cruciform DNA, conferring on it an open structure. The RuvB hexamer acts as an ATP-dependent pump, pulling dsDNA into and through the RuvAB complex. HJ branch migration allows RuvC to scan DNA until it finds its consensus sequence, where it cleaves and resolves the cruciform DNA. The sequence is that of Holliday junction branch migration complex subunit RuvA from Pseudomonas fluorescens (strain ATCC BAA-477 / NRRL B-23932 / Pf-5).